The primary structure comprises 938 residues: Translation initiation factor IF-2 (938 aa).

Residues 57-205 are compositionally biased toward basic and acidic residues; the sequence is DKSKKVASKE…PKSEETKSEE (149 aa). The interval 57–350 is disordered; the sequence is DKSKKVASKE…RSADDLAQQE (294 aa). Over residues 206-215 the composition is skewed to acidic residues; sequence TTEGGESEEK. Residues 248-259 show a composition bias toward basic and acidic residues; sequence KKEEKKEDDKKD. 2 stretches are compositionally biased toward basic residues: residues 260–270 and 285–296; these read KDRRKKRRRRI and GAKKGGRTRSKP. The span at 297 to 319 shows a compositional bias: basic and acidic residues; that stretch reads ITKEEPTEEEVQKQVRETLEKLQ. Residues 323-333 are compositionally biased toward basic residues; the sequence is SKGKGAKYRRQ. The span at 334 to 344 shows a compositional bias: basic and acidic residues; it reads KRDEHRQRSAD. The tr-type G domain maps to 434-602; it reads TRAPIVTVMG…KVLLEAEILE (169 aa). The tract at residues 443–450 is G1; that stretch reads GHVDHGKT. 443-450 is a GTP binding site; the sequence is GHVDHGKT. A G2 region spans residues 468-472; that stretch reads GITQH. The G3 stretch occupies residues 490–493; sequence DTPG. GTP-binding positions include 490 to 494 and 544 to 547; these read DTPGH and NKSD. The tract at residues 544-547 is G4; sequence NKSD. The G5 stretch occupies residues 580 to 582; the sequence is SAK.

It belongs to the TRAFAC class translation factor GTPase superfamily. Classic translation factor GTPase family. IF-2 subfamily.

It is found in the cytoplasm. Its function is as follows. One of the essential components for the initiation of protein synthesis. Protects formylmethionyl-tRNA from spontaneous hydrolysis and promotes its binding to the 30S ribosomal subunits. Also involved in the hydrolysis of GTP during the formation of the 70S ribosomal complex. The polypeptide is Translation initiation factor IF-2 (Christiangramia forsetii (strain DSM 17595 / CGMCC 1.15422 / KT0803) (Gramella forsetii)).